The chain runs to 467 residues: ATP synthase subunit beta, chloroplastic (467 aa).

An ATP-binding site is contributed by Gly149 to Thr156.

Belongs to the ATPase alpha/beta chains family. F-type ATPases have 2 components, CF(1) - the catalytic core - and CF(0) - the membrane proton channel. CF(1) has five subunits: alpha(3), beta(3), gamma(1), delta(1), epsilon(1). CF(0) has four main subunits: a(1), b(1), b'(1) and c(9-12).

The protein resides in the plastid. It localises to the chloroplast thylakoid membrane. The enzyme catalyses ATP + H2O + 4 H(+)(in) = ADP + phosphate + 5 H(+)(out). Its function is as follows. Produces ATP from ADP in the presence of a proton gradient across the membrane. The catalytic sites are hosted primarily by the beta subunits. In Cyanidioschyzon merolae (strain NIES-3377 / 10D) (Unicellular red alga), this protein is ATP synthase subunit beta, chloroplastic.